The primary structure comprises 318 residues: Ankyrin repeat and SOCS box protein 7 (318 aa).

ANK repeat units follow at residues 13–42 (QEES…SPNG), 46–75 (NGWT…DPTV), 80–109 (GGFT…RSDI), 116–145 (DGWT…EVDP), 149–178 (KGTT…NIDI), 180–208 (NGFL…DTNL), and 213–242 (DGQT…DTNT). Positions 265–318 (LDFLQEVTRQPRNLQDLCRIKIRQCIGLQNLKLLDELPIAKVMKDYLKHKSDDI) constitute an SOCS box domain.

The protein belongs to the ankyrin SOCS box (ASB) family. Interacts with CUL5. Interacts with RNF7. Interacts with PSRC1.

It functions in the pathway protein modification; protein ubiquitination. Probable substrate-recognition component of a SCF-like ECS (Elongin-Cullin-SOCS-box protein) E3 ubiquitin-protein ligase complex which mediates the ubiquitination and subsequent proteasomal degradation of target proteins. Plays a role in spindle dynamics and genome integrity by targeting the mitotic progression protein PSRC1 for proteasomal degradation in a cell cycle-dependent manner. Also participates in meiosis by mediating the proper attachment between kinetochores and microtubules. In Pongo abelii (Sumatran orangutan), this protein is Ankyrin repeat and SOCS box protein 7 (ASB7).